Here is a 427-residue protein sequence, read N- to C-terminus: Homeotic protein caudal (427 aa).

The disordered stretch occupies residues 104-273 (QLMQQHHHHH…QPQPGKTRTK (170 aa)). Low complexity predominate over residues 116–129 (ASSSSASSGSSSSG). The segment covering 145–164 (GVGGAGGGGGVGGATDGGPG) has biased composition (gly residues). A compositionally biased stretch (polar residues) spans 183 to 195 (ITVSGSEISSPGA). Residues 209-243 (HLSAVANNNNNNNNNNNSPSTHNNNNNNNSVSNNN) show a composition bias toward low complexity. Phosphothreonine is present on Thr-245. The Antp-type hexapeptide signature appears at 252–257 (YFDWMK). The homeobox DNA-binding region spans 273–332 (KDKYRVVYTDFQRLELEKEYCTSRYITIRRKSELAQTLSLSERQVKIWFQNRRAKERKQN).

It belongs to the Caudal homeobox family. Maternally localized in an anteroposterior gradient in the syncytial blastoderm. Also expressed in the pole cells. Zygotically localized in the primordia of the terminal abdominal segment, the hindgut and in the posterior midgut rudiment. Expressed in the gut, the gonads and parts of the genital disks of third instar larvae (at protein level).

It localises to the nucleus. Its function is as follows. Caudal (cad) is one of a number of transcription factors controlling segmentation of the embryo. Further transcriptional regulation via a 5' flanking region containing DNA replication-related elements (DRE) and by dref also regulated by trh and tgo via the CNS midline element. Alongside Bicoid (bcd), caudal forms concentration gradients down the anterior-posterior (A-P) axis providing positional information and subsequent induction of the gap genes. Plays a role in gastrulation/germ band extension, hindgut morphogenesis, positive regulation of cell proliferation, genital disk development and pattern formation. Acts as a key regulator of the Hox gene network and activates transcription via the downstream core promoter element (DPE) relative to the TATA box. Plays a role in the establishment of the hindgut and in the invagination of the hindgut primordium during gastrulation. These effects on the gut are achieved by acting combinatorially at the posterior of the embryo to activate transcription of different targets including fog, fkh and wg. Caudal is involved in regulation of proliferation through transactivation of the E2F gene. Postembryonically its function is mostly restricted to the intestine where it regulates antimicrobial peptide (AMP) levels preserving the normal gut flora. The sequence is that of Homeotic protein caudal (cad) from Drosophila melanogaster (Fruit fly).